A 176-amino-acid chain; its full sequence is Tubulin polymerization-promoting protein family member 3 (176 aa).

The tract at residues 132 to 151 is disordered; sequence TGSHKERFDQTGKGKGKSGR. A compositionally biased stretch (basic and acidic residues) spans 134-151; sequence SHKERFDQTGKGKGKSGR.

This sequence belongs to the TPPP family.

The protein resides in the cytoplasm. It localises to the cytoskeleton. Functionally, regulator of microtubule dynamic that has microtubule bundling activity. The protein is Tubulin polymerization-promoting protein family member 3 (tppp3) of Xenopus laevis (African clawed frog).